A 190-amino-acid polypeptide reads, in one-letter code: Imidazoleglycerol-phosphate dehydratase (190 aa).

This sequence belongs to the imidazoleglycerol-phosphate dehydratase family.

It is found in the cytoplasm. The enzyme catalyses D-erythro-1-(imidazol-4-yl)glycerol 3-phosphate = 3-(imidazol-4-yl)-2-oxopropyl phosphate + H2O. The protein operates within amino-acid biosynthesis; L-histidine biosynthesis; L-histidine from 5-phospho-alpha-D-ribose 1-diphosphate: step 6/9. In Sulfurovum sp. (strain NBC37-1), this protein is Imidazoleglycerol-phosphate dehydratase.